The chain runs to 317 residues: Melanocyte-stimulating hormone receptor (317 aa).

Residues 1–37 (MPMQEPQRRLLGPFNSTRTGAPHLELSANQTGPWCLH) are Extracellular-facing. N-linked (GlcNAc...) asparagine glycosylation is found at asparagine 15 and asparagine 29. A helical membrane pass occupies residues 38-63 (VSIPDGLFLSLGLVSLVENVLVVISI). The Cytoplasmic segment spans residues 64 to 72 (AKNQNLHSP). A helical transmembrane segment spans residues 73–93 (MYYFICCLALSDLLVSVSIVL). Topologically, residues 94-118 (ETTLILVLEAGALATRVTVVQQLDN) are extracellular. Residues 119–140 (VIDVLICASMVSSLCFLGAIAV) form a helical membrane-spanning segment. The Cytoplasmic segment spans residues 141–163 (DRYISIFYALRYHSIVTLPRARW). A helical membrane pass occupies residues 164–183 (AIVAIWVASISSSTLFVAYY). Topologically, residues 184 to 191 (NHTAVLLC) are extracellular. The helical transmembrane segment at 192 to 211 (LVTFFLATLALMVVLYVHML) threads the bilayer. Over 212 to 240 (ARAHQHAQAIAQLHKRQHLVHQGFRLKGA) the chain is Cytoplasmic. A helical transmembrane segment spans residues 241-266 (ATLTILLGIFFLCWGPFFLYLTLIVL). The Extracellular portion of the chain corresponds to 267–279 (CPKHPTCGCFFKN). A helical transmembrane segment spans residues 280-300 (LNLFLALIIFNSIVDPLIYAF). The Cytoplasmic portion of the chain corresponds to 301-317 (RSQELRMTLKEVLLCSW). The S-palmitoyl cysteine moiety is linked to residue cysteine 315.

It belongs to the G-protein coupled receptor 1 family. Interacts with MGRN1, but does not undergo MGRN1-mediated ubiquitination; this interaction competes with GNAS-binding and thus inhibits agonist-induced cAMP production. Interacts with OPN3; the interaction results in a decrease in MC1R-mediated cAMP signaling and ultimately a decrease in melanin production in melanocytes.

The protein localises to the cell membrane. In terms of biological role, receptor for MSH (alpha, beta and gamma) and ACTH. The activity of this receptor is mediated by G proteins which activate adenylate cyclase. Mediates melanogenesis, the production of eumelanin (black/brown) and phaeomelanin (red/yellow), via regulation of cAMP signaling in melanocytes. In Chaetodipus penicillatus (Desert pocket mouse), this protein is Melanocyte-stimulating hormone receptor (MC1R).